The primary structure comprises 331 residues: Ferredoxin--NADP reductase 2 (331 aa).

The FAD site is built by E37, Q45, Y50, V90, F124, D286, and T327.

It belongs to the ferredoxin--NADP reductase type 2 family. In terms of assembly, homodimer. FAD is required as a cofactor.

It catalyses the reaction 2 reduced [2Fe-2S]-[ferredoxin] + NADP(+) + H(+) = 2 oxidized [2Fe-2S]-[ferredoxin] + NADPH. This Listeria welshimeri serovar 6b (strain ATCC 35897 / DSM 20650 / CCUG 15529 / CIP 8149 / NCTC 11857 / SLCC 5334 / V8) protein is Ferredoxin--NADP reductase 2.